A 273-amino-acid polypeptide reads, in one-letter code: 4-hydroxy-tetrahydrodipicolinate reductase (273 aa).

Residues 12-17 (GAGGRM) and E38 contribute to the NAD(+) site. R39 contacts NADP(+). Residues 102–104 (GTT) and 126–129 (AANF) contribute to the NAD(+) site. H159 acts as the Proton donor/acceptor in catalysis. H160 contacts (S)-2,3,4,5-tetrahydrodipicolinate. K163 acts as the Proton donor in catalysis. A (S)-2,3,4,5-tetrahydrodipicolinate-binding site is contributed by 169–170 (GT).

It belongs to the DapB family. Homotetramer.

The protein resides in the cytoplasm. The enzyme catalyses (S)-2,3,4,5-tetrahydrodipicolinate + NAD(+) + H2O = (2S,4S)-4-hydroxy-2,3,4,5-tetrahydrodipicolinate + NADH + H(+). It carries out the reaction (S)-2,3,4,5-tetrahydrodipicolinate + NADP(+) + H2O = (2S,4S)-4-hydroxy-2,3,4,5-tetrahydrodipicolinate + NADPH + H(+). The protein operates within amino-acid biosynthesis; L-lysine biosynthesis via DAP pathway; (S)-tetrahydrodipicolinate from L-aspartate: step 4/4. Functionally, catalyzes the conversion of 4-hydroxy-tetrahydrodipicolinate (HTPA) to tetrahydrodipicolinate. The polypeptide is 4-hydroxy-tetrahydrodipicolinate reductase (Salmonella paratyphi A (strain ATCC 9150 / SARB42)).